The primary structure comprises 85 residues: F1845 adhesin operon regulatory protein (85 aa).

Regulates the transcription of genes involved in the biosynthesis of F1845 fimbrial adhesin. This is F1845 adhesin operon regulatory protein (daaA) from Escherichia coli.